The chain runs to 194 residues: Large ribosomal subunit protein eL15 (194 aa).

The tract at residues 160-194 (RGLTSAGKKGRGLMYKGKGAEKVRPSVRANSKKAK) is disordered.

The protein belongs to the eukaryotic ribosomal protein eL15 family.

The sequence is that of Large ribosomal subunit protein eL15 from Methanococcus maripaludis (strain C6 / ATCC BAA-1332).